A 122-amino-acid chain; its full sequence is Large ribosomal subunit protein uL14c (122 aa).

This sequence belongs to the universal ribosomal protein uL14 family. As to quaternary structure, part of the 50S ribosomal subunit.

The protein localises to the plastid. It is found in the chloroplast. Binds to 23S rRNA. This is Large ribosomal subunit protein uL14c from Oenothera biennis (German evening primrose).